The following is a 354-amino-acid chain: (R,R)-butanediol dehydrogenase (354 aa).

The 341-residue stretch at 10–350 (GDIRIEDIPE…NNESAVKIIV (341 aa)) folds into the Enoyl reductase (ER) domain. Zn(2+) is bound by residues Cys-37, His-71, and Glu-157.

It belongs to the zinc-containing alcohol dehydrogenase family. Requires Zn(2+) as cofactor.

It catalyses the reaction (R,R)-butane-2,3-diol + NAD(+) = (R)-acetoin + NADH + H(+). It carries out the reaction (S)-acetoin + NAD(+) = diacetyl + NADH + H(+). Functionally, NAD-dependent butanediol dehydrogenase which catalyzes the oxidation of (R,R)-butane-2,3-diol to (3R)-acetoin and of meso-butane-2,3-diol to (3S)-acetoin. Preferentially oxidizes (R,R)-butane-2,3-diol, with a catalytic efficiency approximately fourfold higher than with meso-butane-2,3-diol. Shows a very low activity with (S,S)-butane-2,3-diol. Can also catalyze the reduction of (3R/3S)-acetoin and diacetyl in the presence of NADH. The chain is (R,R)-butanediol dehydrogenase from Neisseria gonorrhoeae (strain ATCC 700825 / FA 1090).